The following is a 117-amino-acid chain: Large ribosomal subunit protein bL19 (117 aa).

This sequence belongs to the bacterial ribosomal protein bL19 family.

Its function is as follows. This protein is located at the 30S-50S ribosomal subunit interface and may play a role in the structure and function of the aminoacyl-tRNA binding site. The polypeptide is Large ribosomal subunit protein bL19 (Desulfotalea psychrophila (strain LSv54 / DSM 12343)).